Consider the following 937-residue polypeptide: Hyphally-regulated protein (937 aa).

A signal peptide spans 1-20; sequence MKVVSNFIFTILLTLNLSAA. The N-linked (GlcNAc...) asparagine glycan is linked to Asn16. Residues 42 to 62 traverse the membrane as a helical segment; it reads VHSGATWAILGTTLCSFFGGL. N-linked (GlcNAc...) asparagine glycosylation is present at Asn236. Positions 332–483 are disordered; the sequence is SAPESESDLN…QSITSSPGQS (152 aa). Low complexity predominate over residues 344-392; the sequence is TTSSIETSSYSSAATESSVVSESSSAVDSLTSSSLSSKSESSDVVSSTT. The segment covering 393–414 has biased composition (polar residues); sequence NIESSSTAIETTMNSESSTDAG. Low complexity predominate over residues 415-475; sequence SSSISQSESS…SNALSSTEQS (61 aa). N-linked (GlcNAc...) asparagine glycans are attached at residues Asn449, Asn488, Asn580, Asn585, Asn595, and Asn603. Residues 567 to 590 show a composition bias toward low complexity; the sequence is DATTTTTTSTGGDNSTGGNESGSN. Residues 567–857 form a disordered region; the sequence is DATTTTTTST…VANPVTTSTE (291 aa). Residues 591–609 are compositionally biased toward gly residues; the sequence is HGPGNGSTEGSGNGSGAGS. Repeat 1 spans residues 610 to 613; sequence NEGS. Residues 610–753 form a 7 X 4 AA repeats of N-E-G-S region; it reads NEGSQSGPNN…GAGNGSNEGS (144 aa). Asn619, Asn631, Asn641, and Asn649 each carry an N-linked (GlcNAc...) asparagine glycan. Composition is skewed to gly residues over residues 619–631 and 641–665; these read NGSGSGSEGGSNN and NGSGSGSNNGSGSGSTEGSEGGSGS. 4 repeat units span residues 666–669, 680–683, 690–693, and 698–701. Over residues 666-682 the composition is skewed to low complexity; it reads NEGSQSGSGSQPGPNEG. The segment covering 699–725 has biased composition (gly residues); it reads EGSGSGSGSGSNNGSGSGSQSGSGSGS. The N-linked (GlcNAc...) asparagine glycan is linked to Asn711. The span at 726–742 shows a compositional bias: low complexity; the sequence is QSGSESGSNSGSNEGSN. The stretch at 738–741 is repeat 6; that stretch reads NEGS. Residues 743–801 show a composition bias toward gly residues; it reads PGAGNGSNEGSGQGSGNGSEAGSGQGSGPNNGSGSGHNDGSGSGSNQGSNPGAGSGSGS. Residue Asn747 is glycosylated (N-linked (GlcNAc...) asparagine). The stretch at 750-753 is repeat 7; that stretch reads NEGS. Asn759 and Asn773 each carry an N-linked (GlcNAc...) asparagine glycan. Low complexity predominate over residues 802-814; sequence ESGSKAGSHSGSN. Residues 817-829 are compositionally biased toward basic and acidic residues; that stretch reads AKTDSIEGFHTES. Residues 841-851 are compositionally biased toward polar residues; it reads ATVTGNSVANP. N-linked (GlcNAc...) asparagine glycosylation is found at Asn897 and Asn913. A lipid anchor (GPI-anchor amidated asparagine) is attached at Asn913. A propeptide spans 914–937 (removed in mature form); that stretch reads GSSIVTGGKSILFGLIVSMVVLFM.

It is found in the cell membrane. It localises to the secreted. Its subcellular location is the cell wall. In terms of biological role, nonessential component of the hyphal cell wall. The polypeptide is Hyphally-regulated protein (HYR1) (Candida albicans (Yeast)).